We begin with the raw amino-acid sequence, 316 residues long: Ribosomal RNA large subunit methyltransferase F (316 aa).

Positions 200-222 (EEANKSTSRKVSNLNPKEKKNTN) are disordered. Residues 204-214 (KSTSRKVSNLN) are compositionally biased toward polar residues.

This sequence belongs to the methyltransferase superfamily. METTL16/RlmF family.

It is found in the cytoplasm. The enzyme catalyses adenosine(1618) in 23S rRNA + S-adenosyl-L-methionine = N(6)-methyladenosine(1618) in 23S rRNA + S-adenosyl-L-homocysteine + H(+). Functionally, specifically methylates the adenine in position 1618 of 23S rRNA. This Flavobacterium johnsoniae (strain ATCC 17061 / DSM 2064 / JCM 8514 / BCRC 14874 / CCUG 350202 / NBRC 14942 / NCIMB 11054 / UW101) (Cytophaga johnsonae) protein is Ribosomal RNA large subunit methyltransferase F.